Consider the following 123-residue polypeptide: Cliotide T12 (123 aa).

Positions methionine 1 to alanine 28 are cleaved as a signal peptide. Positions glycine 29 to aspartate 58 form a cross-link, cyclopeptide (Gly-Asp). Intrachain disulfides connect cysteine 32-cysteine 48, cysteine 36-cysteine 50, and cysteine 41-cysteine 55. The propeptide at histidine 59–asparagine 123 is removed in mature form.

Post-translationally, contains 3 disulfide bonds. This is a cyclic peptide.

Its function is as follows. Probably participates in a plant defense mechanism. This chain is Cliotide T12, found in Clitoria ternatea (Butterfly pea).